Reading from the N-terminus, the 275-residue chain is Protein COFACTOR ASSEMBLY OF COMPLEX C SUBUNIT B CCB2, chloroplastic (275 aa).

A chloroplast-targeting transit peptide spans 1 to 19 (MSIQICNFPFHPKFALQPR). Over 20–65 (AQRSTRIFARTENDSPQSKTSDQQLNLSVLRFTFGIPGFDESYLPR) the chain is Stromal. Residues 66 to 86 (WIGYGFGSLLLLNHFSASAPI) traverse the membrane as a helical segment. Residues 87 to 93 (SESQMRS) are Lumenal-facing. The chain crosses the membrane as a helical span at residues 94 to 114 (EALGLSLAAFSIALPYIGKFL). Residues 115–275 (KGSVVEQRSL…IGAMAEKFRG (161 aa)) are Stromal-facing.

It localises to the plastid. The protein resides in the chloroplast thylakoid membrane. Functionally, required for the biogenesis and accumulation of native cytochrome b6 in the thylakoid membrane. Controls the conversion of apocytochrome b6 to holocytochrome b6. Required for covalent binding of the c-type heme to cytochrome b6. This chain is Protein COFACTOR ASSEMBLY OF COMPLEX C SUBUNIT B CCB2, chloroplastic, found in Arabidopsis thaliana (Mouse-ear cress).